The primary structure comprises 415 residues: Corticotropin-releasing factor receptor 1 (415 aa).

A signal peptide spans Met-1 to Thr-23. The Extracellular portion of the chain corresponds to Ser-24–Lys-111. Cystine bridges form between Cys-30/Cys-54, Cys-44/Cys-87, and Cys-68/Cys-102. N-linked (GlcNAc...) asparagine glycosylation is found at Asn-38, Asn-45, Asn-78, Asn-90, and Asn-98. Residues Tyr-99–Glu-108 are important for peptide agonist binding. Residues Ser-112–Leu-142 traverse the membrane as a helical segment. Over Arg-143 to Cys-149 the chain is Cytoplasmic. The chain crosses the membrane as a helical span at residues Leu-150–Leu-174. Residues Thr-175–Arg-189 are Extracellular-facing. Cys-188 and Cys-258 are oxidised to a cystine. A helical membrane pass occupies residues Leu-190–Val-218. Over Leu-219–Arg-225 the chain is Cytoplasmic. Residues Leu-226–Tyr-253 form a helical membrane-spanning segment. At Asp-254–Asp-269 the chain is on the extracellular side. A helical membrane pass occupies residues Tyr-270–Met-295. The tract at residues Leu-280–Ile-290 is important for antagonist binding. The Cytoplasmic portion of the chain corresponds to Thr-296–Thr-306. Ser-301 carries the phosphoserine; by PKA modification. A helical membrane pass occupies residues Ile-307–Phe-331. The Extracellular segment spans residues Val-332 to Glu-338. The helical transmembrane segment at Val-339–Ser-368 threads the bilayer. Over Glu-369–Val-415 the chain is Cytoplasmic.

This sequence belongs to the G-protein coupled receptor 2 family. Interacts (via N-terminal extracellular domain) with CRH and UCN. Interacts with DLG1; this inhibits endocytosis of CRHR1 after agonist binding. Heterodimer; heterodimerizes with GPER1. In terms of processing, C-terminal Ser or Thr residues may be phosphorylated. Post-translationally, phosphorylation at Ser-301 by PKA prevents maximal coupling to Gq-protein, and thereby negatively regulates downstream signaling. In terms of tissue distribution, detected in brain, especially in cerebellum. Detected in pituitary gland, and at lower levels in the olfactory bulb.

It localises to the cell membrane. It is found in the endosome. In terms of biological role, G-protein coupled receptor for CRH (corticotropin-releasing factor) and UCN (urocortin). Has high affinity for CRH and UCN. Ligand binding causes a conformation change that triggers signaling via guanine nucleotide-binding proteins (G proteins) and down-stream effectors, such as adenylate cyclase. Promotes the activation of adenylate cyclase, leading to increased intracellular cAMP levels. Inhibits the activity of the calcium channel CACNA1H. Required for normal embryonic development of the adrenal gland and for normal hormonal responses to stress. Plays a role in the response to anxiogenic stimuli. The chain is Corticotropin-releasing factor receptor 1 (Crhr1) from Rattus norvegicus (Rat).